Consider the following 70-residue polypeptide: Large ribosomal subunit protein eL38 (70 aa).

This sequence belongs to the eukaryotic ribosomal protein eL38 family.

The polypeptide is Large ribosomal subunit protein eL38 (RpL38) (Drosophila melanogaster (Fruit fly)).